The sequence spans 445 residues: MSKLPGELARDLECSLPAVASLGSSLSHSQSLSSHLLPPPEKRRAISDVRRTFCLFVTFDLLFISLLWIIELNTNTGIRKNLEQEIIQYNFKTSFFDIFVLAFFRFSGLLLGYAVLRLQHWWVIAVTTLVSSAFLIVKVILSELLSKGAFGYLLPIVSFVLAWLETWFLDFKVLPQEAEEERWYLAAQAAVARGPLLFSGALSEGQFYSPPESFAGSDNESDEEVAGKKSFSAQEREYIRQGKEATAVVDQILAQEENWKFEKNNEYGDTVYTIEVPFHGKTFILKTFLPCPAELVYQEVILQPERMVLWNKTVTACQILQRVEDNTLISYDVSAGAAGGMVSPRDFVNVRRIERRRDRYLSSGIATAHSAKPLTHKYVRGENGPGGFVVLKSASNPCVCTFVWILNTDLKGRLPRYLIHQSLAATMFEFAFHLRQRISELGARA.

Residues 1-51 (MSKLPGELARDLECSLPAVASLGSSLSHSQSLSSHLLPPPEKRRAISDVRR) lie on the Cytoplasmic side of the membrane. The MENTAL domain maps to 46 to 217 (ISDVRRTFCL…YSPPESFAGS (172 aa)). A helical membrane pass occupies residues 52 to 72 (TFCLFVTFDLLFISLLWIIEL). The Extracellular segment spans residues 73–94 (NTNTGIRKNLEQEIIQYNFKTS). A helical transmembrane segment spans residues 95–115 (FFDIFVLAFFRFSGLLLGYAV). At 116–120 (LRLQH) the chain is on the cytoplasmic side. Residues 121–141 (WWVIAVTTLVSSAFLIVKVIL) form a helical membrane-spanning segment. Residues 142–148 (SELLSKG) lie on the Extracellular side of the membrane. Residues 149 to 169 (AFGYLLPIVSFVLAWLETWFL) traverse the membrane as a helical segment. At 170 to 445 (DFKVLPQEAE…QRISELGARA (276 aa)) the chain is on the cytoplasmic side. 2 consecutive short sequence motifs (FFAT) follow at residues 206-212 (QFYSPPE) and 207-212 (FYSPPE). S209, S217, and S221 each carry phosphoserine. The START domain occupies 248 to 443 (VVDQILAQEE…LRQRISELGA (196 aa)).

This sequence belongs to the STARD3 family. In terms of assembly, homodimer. Interacts (via the MENTAL domain) with STARD3NL. Interacts (via phosphorylated FFAT motif) with VAPA (via MSP domain). Interacts (via phosphorylated FFAT motif) with VAPB (via MSP domain). Interacts (via phosphorylated FFAT motif) with MOSPD2 (via MSP domain); this interaction allows enrichment of MOSPD2 around endosomes. In terms of processing, phosphorylation at Ser-209 is necessary and sufficient for the direct interaction of the phosphorylated FFAT motif with the MSP domain of MOSPD2, VAPA and VAPB and allows the tethering of two membranes that participates in the formation of ER-endosome contacts. Phosphorylation of the FFAT motif leads to conformation changes. Additional phosphorylations around the core FFAT motif (QFYSPPE) are not essential but strengthen the interaction with MOSPD2, VAPA and VAPB. Phosphorylation at Ser-209 of FFAT motif drives membrane tethering between the endoplasmic reticulum and late endosomes via interaction with VAPA and VAPB that in turn allows the efficient transport of sterol mediated by the START domain. Present in retina. Localizes to all neurons of macular retina and especially cone inner segments and axons (at protein level).

The protein resides in the late endosome membrane. It catalyses the reaction cholesterol(in) = cholesterol(out). In terms of biological role, sterol-binding protein that mediates cholesterol transport from the endoplasmic reticulum to endosomes. The sterol transport mechanism is triggered by phosphorylation of FFAT motif that leads to membrane tethering between the endoplasmic reticulum and late endosomes via interaction with VAPA and VAPB. Acts as a lipid transfer protein that redirects sterol to the endosome at the expense of the cell membrane and favors membrane formation inside endosomes. May also mediate cholesterol transport between other membranes, such as mitochondria membrane or cell membrane. However, such results need additional experimental evidences; probably mainly mediates cholesterol transport from the endoplasmic reticulum to endosomes. Does not activate transcriptional cholesterol sensing. Able to bind other lipids, such as lutein, a xanthophyll carotenoids that form the macular pigment of the retina. Able to bind other lipids, such as lutein, a xanthophyll carotenoids that form the macular pigment of the retina. The chain is StAR-related lipid transfer protein 3 from Macaca mulatta (Rhesus macaque).